We begin with the raw amino-acid sequence, 532 residues long: Protoporphyrinogen oxidase (532 aa).

Residues 9–14 (GSGISG), I289, and 511–513 (VGI) contribute to the FAD site.

This sequence belongs to the protoporphyrinogen/coproporphyrinogen oxidase family. Protoporphyrinogen oxidase subfamily. It depends on FAD as a cofactor.

It is found in the mitochondrion. It carries out the reaction protoporphyrinogen IX + 3 O2 = protoporphyrin IX + 3 H2O2. It functions in the pathway porphyrin-containing compound metabolism; protoporphyrin-IX biosynthesis; protoporphyrin-IX from protoporphyrinogen-IX: step 1/1. Its function is as follows. Catalyzes the 6-electron oxidation of protoporphyrinogen-IX to form protoporphyrin-IX. The protein is Protoporphyrinogen oxidase (ppox) of Dictyostelium discoideum (Social amoeba).